A 95-amino-acid polypeptide reads, in one-letter code: Aspartyl/glutamyl-tRNA(Asn/Gln) amidotransferase subunit C (95 aa).

The protein belongs to the GatC family. As to quaternary structure, heterotrimer of A, B and C subunits.

The catalysed reaction is L-glutamyl-tRNA(Gln) + L-glutamine + ATP + H2O = L-glutaminyl-tRNA(Gln) + L-glutamate + ADP + phosphate + H(+). It catalyses the reaction L-aspartyl-tRNA(Asn) + L-glutamine + ATP + H2O = L-asparaginyl-tRNA(Asn) + L-glutamate + ADP + phosphate + 2 H(+). Allows the formation of correctly charged Asn-tRNA(Asn) or Gln-tRNA(Gln) through the transamidation of misacylated Asp-tRNA(Asn) or Glu-tRNA(Gln) in organisms which lack either or both of asparaginyl-tRNA or glutaminyl-tRNA synthetases. The reaction takes place in the presence of glutamine and ATP through an activated phospho-Asp-tRNA(Asn) or phospho-Glu-tRNA(Gln). The chain is Aspartyl/glutamyl-tRNA(Asn/Gln) amidotransferase subunit C from Brucella anthropi (strain ATCC 49188 / DSM 6882 / CCUG 24695 / JCM 21032 / LMG 3331 / NBRC 15819 / NCTC 12168 / Alc 37) (Ochrobactrum anthropi).